The sequence spans 454 residues: Ribosomal protein uS12 methylthiotransferase RimO (454 aa).

In terms of domain architecture, MTTase N-terminal spans 9-124; that stretch reads PKIGFVSLGC…VMDAVHLHMP (116 aa). [4Fe-4S] cluster-binding residues include Cys18, Cys54, Cys83, Cys155, Cys159, and Cys162. Residues 141–382 form the Radical SAM core domain; it reads LTPKHFAYLK…MLLQEEISKK (242 aa). Residues 385 to 454 form the TRAM domain; sequence QAKVGKTMRV…ADAHDLWAEA (70 aa).

The protein belongs to the methylthiotransferase family. RimO subfamily. The cofactor is [4Fe-4S] cluster.

Its subcellular location is the cytoplasm. The catalysed reaction is L-aspartate(89)-[ribosomal protein uS12]-hydrogen + (sulfur carrier)-SH + AH2 + 2 S-adenosyl-L-methionine = 3-methylsulfanyl-L-aspartate(89)-[ribosomal protein uS12]-hydrogen + (sulfur carrier)-H + 5'-deoxyadenosine + L-methionine + A + S-adenosyl-L-homocysteine + 2 H(+). Its function is as follows. Catalyzes the methylthiolation of an aspartic acid residue of ribosomal protein uS12. The sequence is that of Ribosomal protein uS12 methylthiotransferase RimO from Herminiimonas arsenicoxydans.